Consider the following 93-residue polypeptide: ATP synthase subunit c (93 aa).

The next 2 helical transmembrane spans lie at 13–33 (AIGVGIAIGVAACGGGIGMGI) and 58–78 (ISLAMIEAQVIYALVIVFILL).

The protein belongs to the ATPase C chain family. F-type ATPases have 2 components, F(1) - the catalytic core - and F(0) - the membrane proton channel. F(1) has five subunits: alpha(3), beta(3), gamma(1), delta(1), epsilon(1). F(0) has three main subunits: a(1), b(2) and c(10-14). The alpha and beta chains form an alternating ring which encloses part of the gamma chain. F(1) is attached to F(0) by a central stalk formed by the gamma and epsilon chains, while a peripheral stalk is formed by the delta and b chains.

The protein resides in the cell inner membrane. F(1)F(0) ATP synthase produces ATP from ADP in the presence of a proton or sodium gradient. F-type ATPases consist of two structural domains, F(1) containing the extramembraneous catalytic core and F(0) containing the membrane proton channel, linked together by a central stalk and a peripheral stalk. During catalysis, ATP synthesis in the catalytic domain of F(1) is coupled via a rotary mechanism of the central stalk subunits to proton translocation. In terms of biological role, key component of the F(0) channel; it plays a direct role in translocation across the membrane. A homomeric c-ring of between 10-14 subunits forms the central stalk rotor element with the F(1) delta and epsilon subunits. This is ATP synthase subunit c from Campylobacter hominis (strain ATCC BAA-381 / DSM 21671 / CCUG 45161 / LMG 19568 / NCTC 13146 / CH001A).